The following is a 315-amino-acid chain: Adenine deaminase (315 aa).

Histidine 14, histidine 16, and histidine 194 together coordinate Zn(2+). Catalysis depends on glutamate 197, which acts as the Proton donor. Aspartate 275 contacts Zn(2+). Aspartate 276 is a binding site for substrate.

The protein belongs to the metallo-dependent hydrolases superfamily. Adenosine and AMP deaminases family. Adenine deaminase type 2 subfamily. Requires Zn(2+) as cofactor.

The catalysed reaction is adenine + H2O + H(+) = hypoxanthine + NH4(+). Its function is as follows. Catalyzes the hydrolytic deamination of adenine to hypoxanthine. Plays an important role in the purine salvage pathway and in nitrogen catabolism. This is Adenine deaminase from Pseudomonas putida (strain GB-1).